The following is a 699-amino-acid chain: MPINKSEKPESCDNVKVVVRCRPLNEREKSMCYKQAVSVDEMRGTITVHKTDSSNEPPKTFTFDTVFGPESKQLDVYNLTARPIIDSVLEGYNGTIFAYGQTGTGKTFTMEGVRAIPELRGIIPNSFAHIFGHIAKAEGDTRFLVRVSYLEIYNEEVRDLLGKDQTQRLEVKERPDVGVYIKDLSAYVVNNADDMDRIMTLGHKNRSVGATNMNEHSSRSHAIFTITIECSEKGIDGNMHVRMGKLHLVDLAGSERQAKTGATGQRLKEATKINLSLSTLGNVISALVDGKSTHVPYRNSKLTRLLQDSLGGNSKTMMCANIGPADYNYDETISTLRYANRAKNIKNKARINEDPKDALLRQFQKEIEELKKKLEEGEEISGSDISGSEEDDDEEGEVGEDGEKRKKRRGKKKVSPDKMIEMQAKIDEERKALETKLDMEEEERNKARAELEKREKDLLKAQQEHQSLLEKLSALEKKVIVGGVDLLAKAEEQEKLLEESNMELEERRKRAEQLRRELEEKEQERLDIEEKYTSLQEEAQGKTKKLKKVWTMLMAAKSEMADLQQEHQREIEGLLENIRQLSRELRLQMLIIDNFIPRDYQEMIENYVHWNEDIGEWQLKCVAYTGNNMRKQTPVPDKKEKDPFEVDLSHVYLAYTEESLRQSLMKLERPRTSKGKARPKTGRRKRSAKPETVIDSLLQ.

The Kinesin motor domain maps to 14–345 (NVKVVVRCRP…LRYANRAKNI (332 aa)). Position 100–107 (100–107 (GQTGTGKT)) interacts with ATP. Residues 355–590 (PKDALLRQFQ…LSRELRLQML (236 aa)) are a coiled coil. Disordered regions lie at residues 372–421 (KKLE…KMIE) and 663–699 (SLMK…SLLQ). The span at 376–400 (EGEEISGSDISGSEEDDDEEGEVGE) shows a compositional bias: acidic residues. A compositionally biased stretch (basic residues) spans 672–687 (TSKGKARPKTGRRKRS). Serine 687 is subject to Phosphoserine. Residues 697–699 (LLQ) form a globular region.

This sequence belongs to the TRAFAC class myosin-kinesin ATPase superfamily. Kinesin family. Kinesin II subfamily. In terms of assembly, heterodimer of KIF3A and KIF3B. Interacts with CIMAP3. Interacts with CLN3. Interacts with DCTN1. Interacts with FLCN. Interacts with AP3B1.

It is found in the cytoplasm. It localises to the cytoskeleton. The protein localises to the cell projection. The protein resides in the cilium. Its subcellular location is the microtubule organizing center. It is found in the centrosome. It localises to the centriole. Functionally, microtubule-based anterograde translocator for membranous organelles. Plus end-directed microtubule sliding activity in vitro. Plays a role in primary cilia formation. Plays a role in centriole cohesion and subdistal appendage organization and function. Regulates the formation of the subdistal appendage via recruitment of DCTN1 to the centriole. Also required for ciliary basal feet formation and microtubule anchoring to mother centriole. The sequence is that of Kinesin-like protein KIF3A (KIF3A) from Homo sapiens (Human).